A 350-amino-acid polypeptide reads, in one-letter code: Mitogen-activated protein kinase HOG1 (350 aa).

The region spanning Tyr-20–Leu-299 is the Protein kinase domain. ATP contacts are provided by residues Val-26–Val-34 and Lys-49. Asp-141 (proton acceptor) is an active-site residue. A TXY motif is present at residues Thr-171–Tyr-173.

Belongs to the protein kinase superfamily. Ser/Thr protein kinase family. MAP kinase subfamily. HOG1 sub-subfamily. It depends on Mg(2+) as a cofactor.

It localises to the cytoplasm. It is found in the nucleus. The enzyme catalyses L-seryl-[protein] + ATP = O-phospho-L-seryl-[protein] + ADP + H(+). The catalysed reaction is L-threonyl-[protein] + ATP = O-phospho-L-threonyl-[protein] + ADP + H(+). Functionally, proline-directed serine/threonine-protein kinase involved in a signal transduction pathway that is activated by changes in the osmolarity of the extracellular environment. Controls osmotic regulation of transcription of target genes. Involved in environmental stress response. Via the downstream MSN2 transcription factor, may play roles in the regulation of growth, conidiation, trap development, fatty acid metabolism and secondary metabolites biosynthesis. The sequence is that of Mitogen-activated protein kinase HOG1 from Arthrobotrys oligospora (strain ATCC 24927 / CBS 115.81 / DSM 1491) (Nematode-trapping fungus).